A 358-amino-acid polypeptide reads, in one-letter code: 4-hydroxy-3-methylbut-2-en-1-yl diphosphate synthase (flavodoxin) (358 aa).

[4Fe-4S] cluster is bound by residues C270, C273, C305, and E312.

Belongs to the IspG family. It depends on [4Fe-4S] cluster as a cofactor.

The enzyme catalyses (2E)-4-hydroxy-3-methylbut-2-enyl diphosphate + oxidized [flavodoxin] + H2O + 2 H(+) = 2-C-methyl-D-erythritol 2,4-cyclic diphosphate + reduced [flavodoxin]. The protein operates within isoprenoid biosynthesis; isopentenyl diphosphate biosynthesis via DXP pathway; isopentenyl diphosphate from 1-deoxy-D-xylulose 5-phosphate: step 5/6. Its function is as follows. Converts 2C-methyl-D-erythritol 2,4-cyclodiphosphate (ME-2,4cPP) into 1-hydroxy-2-methyl-2-(E)-butenyl 4-diphosphate. This chain is 4-hydroxy-3-methylbut-2-en-1-yl diphosphate synthase (flavodoxin), found in Ruthia magnifica subsp. Calyptogena magnifica.